We begin with the raw amino-acid sequence, 327 residues long: RING-H2 finger protein ATL34 (327 aa).

An N-terminal signal peptide occupies residues 1–26 (MTIGKSPILLHHHVIFLLLLVLQVSG). The chain crosses the membrane as a helical span at residues 47–67 (AVIIAMLMFTLLFSMLACCVC). Residues 128 to 170 (CAICLNEFEDEETLRLMPPCSHAFHASCIDVWLSSRSTCPVCR) form an RING-type; atypical zinc finger. Residues 280-327 (LSHMKTLPQARSSREGYRSGSVGSERRGKGKEKEFGEGSFDRLKAEMV) are disordered. Residues 303-327 (SERRGKGKEKEFGEGSFDRLKAEMV) show a composition bias toward basic and acidic residues.

The protein belongs to the RING-type zinc finger family. ATL subfamily.

It localises to the membrane. The catalysed reaction is S-ubiquitinyl-[E2 ubiquitin-conjugating enzyme]-L-cysteine + [acceptor protein]-L-lysine = [E2 ubiquitin-conjugating enzyme]-L-cysteine + N(6)-ubiquitinyl-[acceptor protein]-L-lysine.. It participates in protein modification; protein ubiquitination. The protein is RING-H2 finger protein ATL34 (ATL34) of Arabidopsis thaliana (Mouse-ear cress).